A 474-amino-acid polypeptide reads, in one-letter code: uncharacterized protein (474 aa).

The next 10 helical transmembrane spans lie at 17 to 39 (ILGG…SVYY), 44 to 61 (FLNF…GFVL), 81 to 103 (LAWL…YFSY), 144 to 166 (GVGI…YLLY), 186 to 208 (IIWI…GLSF), 239 to 256 (IVMI…FSIH), 268 to 286 (IQTK…IISI), 319 to 341 (LSLF…TGGV), 385 to 407 (AFVV…IALG), and 444 to 466 (IIAM…TLYF).

It belongs to the TrkH potassium transport family.

Its subcellular location is the cell membrane. This is an uncharacterized protein from Methanocaldococcus jannaschii (strain ATCC 43067 / DSM 2661 / JAL-1 / JCM 10045 / NBRC 100440) (Methanococcus jannaschii).